Here is a 284-residue protein sequence, read N- to C-terminus: 4-diphosphocytidyl-2-C-methyl-D-erythritol kinase (284 aa).

Lys-9 is an active-site residue. 92–102 (PMGGGIGGGSS) provides a ligand contact to ATP. Asp-134 is an active-site residue.

This sequence belongs to the GHMP kinase family. IspE subfamily.

It catalyses the reaction 4-CDP-2-C-methyl-D-erythritol + ATP = 4-CDP-2-C-methyl-D-erythritol 2-phosphate + ADP + H(+). Its pathway is isoprenoid biosynthesis; isopentenyl diphosphate biosynthesis via DXP pathway; isopentenyl diphosphate from 1-deoxy-D-xylulose 5-phosphate: step 3/6. Functionally, catalyzes the phosphorylation of the position 2 hydroxy group of 4-diphosphocytidyl-2C-methyl-D-erythritol. The chain is 4-diphosphocytidyl-2-C-methyl-D-erythritol kinase from Stutzerimonas stutzeri (strain A1501) (Pseudomonas stutzeri).